The sequence spans 157 residues: 2-C-methyl-D-erythritol 2,4-cyclodiphosphate synthase (157 aa).

Aspartate 9 and histidine 11 together coordinate a divalent metal cation. 4-CDP-2-C-methyl-D-erythritol 2-phosphate is bound by residues 9–11 and 35–36; these read DVH and HS. Histidine 43 contributes to the a divalent metal cation binding site. Residues 57–59, 62–66, 101–107, 133–136, phenylalanine 140, and arginine 143 each bind 4-CDP-2-C-methyl-D-erythritol 2-phosphate; these read DIG, FPDTD, AEKPKMA, and TTTE.

Belongs to the IspF family. Homotrimer. It depends on a divalent metal cation as a cofactor.

It catalyses the reaction 4-CDP-2-C-methyl-D-erythritol 2-phosphate = 2-C-methyl-D-erythritol 2,4-cyclic diphosphate + CMP. It participates in isoprenoid biosynthesis; isopentenyl diphosphate biosynthesis via DXP pathway; isopentenyl diphosphate from 1-deoxy-D-xylulose 5-phosphate: step 4/6. Involved in the biosynthesis of isopentenyl diphosphate (IPP) and dimethylallyl diphosphate (DMAPP), two major building blocks of isoprenoid compounds. Catalyzes the conversion of 4-diphosphocytidyl-2-C-methyl-D-erythritol 2-phosphate (CDP-ME2P) to 2-C-methyl-D-erythritol 2,4-cyclodiphosphate (ME-CPP) with a corresponding release of cytidine 5-monophosphate (CMP). The sequence is that of 2-C-methyl-D-erythritol 2,4-cyclodiphosphate synthase from Listeria monocytogenes serovar 1/2a (strain ATCC BAA-679 / EGD-e).